Here is a 270-residue protein sequence, read N- to C-terminus: Urease accessory protein UreD (270 aa).

The protein belongs to the UreD family. UreD, UreF and UreG form a complex that acts as a GTP-hydrolysis-dependent molecular chaperone, activating the urease apoprotein by helping to assemble the nickel containing metallocenter of UreC. The UreE protein probably delivers the nickel.

It is found in the cytoplasm. Required for maturation of urease via the functional incorporation of the urease nickel metallocenter. The chain is Urease accessory protein UreD from Actinobacillus pleuropneumoniae serotype 7 (strain AP76).